The chain runs to 359 residues: Guanine nucleotide-binding protein subunit alpha-11 (359 aa).

2 S-palmitoyl cysteine lipidation sites follow: C9 and C10. One can recognise a G-alpha domain in the interval 38 to 359 (RELKLLLLGT…QLNLKEYNLV (322 aa)). A G1 motif region spans residues 41 to 54 (KLLLLGTGESGKST). GTP-binding positions include 46 to 53 (GTGESGKS) and 180 to 183 (LRVR). S53 is a binding site for Mg(2+). The segment at 178 to 186 (DVLRVRVPT) is G2 motif. T186 contacts Mg(2+). The segment at 201–210 (FRMVDVGGQR) is G3 motif. Residues 270–277 (ILFLNKKD) form a G4 motif region. Residues 274-277 (NKKD) and A331 each bind GTP. The G5 motif stretch occupies residues 329–334 (TCATDT).

Belongs to the G-alpha family. G(q) subfamily. As to quaternary structure, g proteins are composed of 3 units; alpha, beta and gamma. The alpha chain contains the guanine nucleotide binding site. Interacts with RGS22. Interacts with NTSR1.

The protein resides in the cell membrane. It localises to the cytoplasm. The catalysed reaction is GTP + H2O = GDP + phosphate + H(+). Functionally, guanine nucleotide-binding proteins (G proteins) function as transducers downstream of G protein-coupled receptors (GPCRs) in numerous signaling cascades. The alpha chain contains the guanine nucleotide binding site and alternates between an active, GTP-bound state and an inactive, GDP-bound state. Signaling by an activated GPCR promotes GDP release and GTP binding. The alpha subunit has a low GTPase activity that converts bound GTP to GDP, thereby terminating the signal. Both GDP release and GTP hydrolysis are modulated by numerous regulatory proteins. Signaling is mediated via phospholipase C-beta-dependent inositol lipid hydrolysis for signal propagation: activates phospholipase C-beta: following GPCR activation, GNA11 activates PLC-beta (PLCB1, PLCB2, PLCB3 or PLCB4), leading to production of diacylglycerol (DAG) and inositol 1,4,5-trisphosphate (IP3). Transduces FFAR4 signaling in response to long-chain fatty acids (LCFAs). Together with GNAQ, required for heart development. In the respiratory epithelium, transmits OXGR1-dependent signals that lead to downstream intracellular Ca(2+) release and mucocilliary clearance of airborne pathogens. The polypeptide is Guanine nucleotide-binding protein subunit alpha-11 (GNA11) (Sus scrofa (Pig)).